Here is a 693-residue protein sequence, read N- to C-terminus: Elongation factor G (693 aa).

The tr-type G domain maps to 8–282 (EKTRNIGIMA…AVLDYLPSPL (275 aa)). Residues 17 to 24 (AHVDAGKT), 81 to 85 (DTPGH), and 135 to 138 (NKMD) contribute to the GTP site.

Belongs to the TRAFAC class translation factor GTPase superfamily. Classic translation factor GTPase family. EF-G/EF-2 subfamily.

Its subcellular location is the cytoplasm. In terms of biological role, catalyzes the GTP-dependent ribosomal translocation step during translation elongation. During this step, the ribosome changes from the pre-translocational (PRE) to the post-translocational (POST) state as the newly formed A-site-bound peptidyl-tRNA and P-site-bound deacylated tRNA move to the P and E sites, respectively. Catalyzes the coordinated movement of the two tRNA molecules, the mRNA and conformational changes in the ribosome. The polypeptide is Elongation factor G (Enterococcus faecalis (strain ATCC 700802 / V583)).